A 425-amino-acid chain; its full sequence is Serine--tRNA ligase (425 aa).

233–235 (TAE) contacts L-serine. ATP is bound by residues 264–266 (RRE) and valine 280. Position 287 (glutamate 287) interacts with L-serine. Residue 351–354 (EVSS) coordinates ATP. Serine 387 is an L-serine binding site.

This sequence belongs to the class-II aminoacyl-tRNA synthetase family. Type-1 seryl-tRNA synthetase subfamily. In terms of assembly, homodimer. The tRNA molecule binds across the dimer.

It is found in the cytoplasm. It catalyses the reaction tRNA(Ser) + L-serine + ATP = L-seryl-tRNA(Ser) + AMP + diphosphate + H(+). The enzyme catalyses tRNA(Sec) + L-serine + ATP = L-seryl-tRNA(Sec) + AMP + diphosphate + H(+). Its pathway is aminoacyl-tRNA biosynthesis; selenocysteinyl-tRNA(Sec) biosynthesis; L-seryl-tRNA(Sec) from L-serine and tRNA(Sec): step 1/1. Its function is as follows. Catalyzes the attachment of serine to tRNA(Ser). Is also able to aminoacylate tRNA(Sec) with serine, to form the misacylated tRNA L-seryl-tRNA(Sec), which will be further converted into selenocysteinyl-tRNA(Sec). This Gemmatimonas aurantiaca (strain DSM 14586 / JCM 11422 / NBRC 100505 / T-27) protein is Serine--tRNA ligase.